Consider the following 382-residue polypeptide: MSNSRNIVIVGGGITGVSCLYFLAHHPSFNRDRDTITLFESAGIASAASGKASGFLSLEWHGPSTSSLAALSYNLHKELSDQYDGVNKWGYRALDTWSIKADENCQQPDKLPEGIEWIAPSIVENVTRLGNKKNSGQVHPYKFCHAIYEEASKVANVTLVKGHVLSVDENEVEYRLIGDDYAPDEEEEITSAEELHTIHSMEATHIIVAAGPWTPQLIPNLRISGARIHSITIDLPIKLNGNAVFSEITYKDGTIAAPEFYAREDELYVCGEFDDEPLPELSSDTKVDQDKCALIKQCANHFHQIIRDSPVKVRQACYLPISNATGAPVIGKIGSSIYVAAAHGCWGITLGPGTGKVLSELILDGAVTSANIDLLDPEGSLE.

The helical transmembrane segment at 7 to 27 (IVIVGGGITGVSCLYFLAHHP) threads the bilayer.

The protein belongs to the TDA3 family.

It localises to the cytoplasm. The protein resides in the membrane. Functionally, putative oxidoreductase that negatively regulates the retrieval of cargo from late endosomes to the Golgi. In Schizosaccharomyces pombe (strain 972 / ATCC 24843) (Fission yeast), this protein is Putative oxidoreductase C1F5.03c.